Here is a 439-residue protein sequence, read N- to C-terminus: MKRIATPSLTSRLLVAARSGVSPATAAIRSRSAISVRSQSTAALAQHDASHDLNNDRFPPLEPLPPAAESLPSPLPERALTSAKLAALHARLNLSPKIPLQTLARTLVDASADENPQFNNANLAFVGQTLINYHIAEWLLCKYPRLPQGILFSAMKAYAGPKPLLQIARSWGVDTAAVPGGEVDPGLLQFDALKPGVAITNFGYKRTELAYLEKFKWRRGMASRVVLDDDFGDVVRSDPKVAADLEKAMEEQDQDKTPDEEEAEMVANEQDQDVSYDRYGNPDTRAAAERAHAYFVRAVVGAIYAHCGREAAKAFVKAHIMSRTLDIAKLFEFKYPTRELAALCAREDFEPPVARLLSETGRQSRTPVFVVGIYSGSDKLGEGAASSLDHARFKAAMNALKAWYLYSPGENPRVPSDMLEEGAKPWTPAYIDMGEVISR.

Disordered regions lie at residues 39 to 73 (QSTAALAQHDASHDLNNDRFPPLEPLPPAAESLPS) and 247 to 282 (KAMEEQDQDKTPDEEEAEMVANEQDQDVSYDRYGNP). Residues 247-257 (KAMEEQDQDKT) are compositionally biased toward basic and acidic residues. Acidic residues predominate over residues 258–274 (PDEEEAEMVANEQDQDV).

The protein belongs to the ribonuclease III family. Mitochondrion-specific ribosomal protein mL44 subfamily. Component of the mitochondrial large ribosomal subunit (mt-LSU). Mature N.crassa 74S mitochondrial ribosomes consist of a small (37S) and a large (54S) subunit. The 37S small subunit contains a 16S ribosomal RNA (16S mt-rRNA) and 32 different proteins. The 54S large subunit contains a 23S rRNA (23S mt-rRNA) and 42 different proteins. mL44 forms a heterodimer with mL57 and stabilizes rRNA expansion segments 1/2 at a membrane-facing protuberance close to the point of attachment of the ribosome to the translocon in the membrane.

The protein localises to the mitochondrion. Functionally, component of the mitochondrial ribosome (mitoribosome), a dedicated translation machinery responsible for the synthesis of mitochondrial genome-encoded proteins, including at least some of the essential transmembrane subunits of the mitochondrial respiratory chain. The mitoribosomes are attached to the mitochondrial inner membrane and translation products are cotranslationally integrated into the membrane. The sequence is that of Large ribosomal subunit protein mL44 (mrpl3) from Neurospora crassa (strain ATCC 24698 / 74-OR23-1A / CBS 708.71 / DSM 1257 / FGSC 987).